The primary structure comprises 655 residues: Inactive serine protease scarface (655 aa).

The N-terminal stretch at 1–24 (MSASHFREQLALCITLAVLAAASG) is a signal peptide. 2 stretches are compositionally biased toward polar residues: residues 213–225 (TQAP…TTAV) and 237–252 (PSTT…QTSR). The disordered stretch occupies residues 213-319 (TQAPFRPQPT…QPSNQKPIYR (107 aa)). The segment at 343–407 (KCASALVCTS…PNYVDPWPVN (65 aa)) is CLIP. Intrachain disulfides connect cysteine 344/cysteine 394, cysteine 350/cysteine 383, cysteine 356/cysteine 395, cysteine 450/cysteine 466, cysteine 547/cysteine 605, cysteine 579/cysteine 587, and cysteine 595/cysteine 623. In terms of domain architecture, Peptidase S1 spans 421–644 (PTGVKDLDAN…DIKWINTAFA (224 aa)).

Belongs to the peptidase S1 family.

It localises to the secreted. Its function is as follows. Inactive serine protease that plays a role in germ-band retraction and dorsal closure morphogenesis in embryogenesis; contributes to amnioserosa attachment and epithelial apico-basal polarity by regulating the localization of laminin LanA on the apical side of the amnioserosa epithelium. Contributes to epithelial morphogenesis probably by regulating the bsk/JNK pathway, as part of a negative-feedback loop, and by modulating the cross-talk between the Egfr, bsk/JNK and dpp signal transduction pathways. In larval development, antagonizes the morphogenetic movements controlled by the bsk/JNK signaling including male genitalia formation and thorax development. The polypeptide is Inactive serine protease scarface (Drosophila melanogaster (Fruit fly)).